The chain runs to 352 residues: Ribosomal RNA large subunit methyltransferase M (352 aa).

S-adenosyl-L-methionine contacts are provided by residues serine 184, 217–220, aspartate 236, aspartate 256, and aspartate 272; that span reads APGG. The active-site Proton acceptor is the lysine 301.

It belongs to the class I-like SAM-binding methyltransferase superfamily. RNA methyltransferase RlmE family. RlmM subfamily. In terms of assembly, monomer.

The protein localises to the cytoplasm. It catalyses the reaction cytidine(2498) in 23S rRNA + S-adenosyl-L-methionine = 2'-O-methylcytidine(2498) in 23S rRNA + S-adenosyl-L-homocysteine + H(+). Its function is as follows. Catalyzes the 2'-O-methylation at nucleotide C2498 in 23S rRNA. The protein is Ribosomal RNA large subunit methyltransferase M of Pseudomonas paraeruginosa (strain DSM 24068 / PA7) (Pseudomonas aeruginosa (strain PA7)).